The following is a 458-amino-acid chain: Sphingoid long chain base kinase 4 (458 aa).

One can recognise a DAGKc domain in the interval 103 to 241 (KRSRRFIVFI…FDLMTFEQKG (139 aa)). ATP-binding positions include 113 to 115 (NPH) and Thr145. Position 170–173 (170–173 (GGDG)) interacts with substrate. The Proton donor/acceptor role is filled by Asp172. ATP is bound by residues Glu177, 202 to 204 (GSG), Arg266, Arg272, and 426 to 428 (DGE).

Its subcellular location is the cell membrane. It localises to the endoplasmic reticulum membrane. The protein resides in the late endosome membrane. It is found in the golgi apparatus membrane. It catalyses the reaction a sphingoid base + ATP = a sphingoid 1-phosphate + ADP + H(+). In terms of biological role, catalyzes the phosphorylation of the sphingoid long chain bases dihydrosphingosine (DHS) and phytosphingosine (PHS) to form dihydrosphingosine 1-phosphate (DHS-1P) and phytosphingosine 1-phosphate (PHS-1P) respectively. Involved in the biosynthesis of sphingolipids and ceramides. Involved in heat-induced transient cell cycle arrest. Accumulation of phosphorylated sphingoid long chain bases (LCBPs) stimulates calcium influx and activates calcineurin signaling. Involved in heat-stress resistance. The protein is Sphingoid long chain base kinase 4 (lcb4) of Schizosaccharomyces pombe (strain 972 / ATCC 24843) (Fission yeast).